Consider the following 124-residue polypeptide: MVAWLWKVLVGVGLSALAHAAFSAAQHRSHTRLAEMKYEPLPTDIVLQTLLAFALTCYGVVHTAGDFRDRDATSELKNVTFDTLRNRPSFYVFQHSGSSLLQPSDTTRSSNLNVPSSDDIRLKF.

Residue methionine 1 is a topological domain, cytoplasmic. Residues 2 to 22 traverse the membrane as a helical segment; the sequence is VAWLWKVLVGVGLSALAHAAF. Residues 23–44 are Lumenal-facing; that stretch reads SAAQHRSHTRLAEMKYEPLPTD. The chain crosses the membrane as a helical span at residues 45-65; sequence IVLQTLLAFALTCYGVVHTAG. Residues 66–124 are Cytoplasmic-facing; sequence DFRDRDATSELKNVTFDTLRNRPSFYVFQHSGSSLLQPSDTTRSSNLNVPSSDDIRLKF.

This sequence belongs to the membrane magnesium transporter (TC 1.A.67) family.

Its subcellular location is the golgi apparatus membrane. It localises to the early endosome membrane. Its function is as follows. Mediates Mg(2+) transport. The protein is Membrane magnesium transporter 2 of Rattus norvegicus (Rat).